Here is a 121-residue protein sequence, read N- to C-terminus: Small ribosomal subunit protein uS13 (121 aa).

The interval 94–121 is disordered; it reads GLPVRGQRTRTNARTRKGPRKGAAALKK.

Belongs to the universal ribosomal protein uS13 family. As to quaternary structure, part of the 30S ribosomal subunit. Forms a loose heterodimer with protein S19. Forms two bridges to the 50S subunit in the 70S ribosome.

Its function is as follows. Located at the top of the head of the 30S subunit, it contacts several helices of the 16S rRNA. In the 70S ribosome it contacts the 23S rRNA (bridge B1a) and protein L5 of the 50S subunit (bridge B1b), connecting the 2 subunits; these bridges are implicated in subunit movement. Contacts the tRNAs in the A and P-sites. In Verminephrobacter eiseniae (strain EF01-2), this protein is Small ribosomal subunit protein uS13.